The primary structure comprises 498 residues: Cytochrome P450 monooxygenase 110 (498 aa).

The chain crosses the membrane as a helical span at residues 7-24 (YVFALLGILATLYFVRWS). N425 carries N-linked (GlcNAc...) asparagine glycosylation. Heme is bound at residue C440.

This sequence belongs to the cytochrome P450 family. Requires heme as cofactor.

Its subcellular location is the membrane. Its pathway is secondary metabolite biosynthesis. Cytochrome P450 monooxygenase that is able to use dehydroabietic acid and testosterone as substrates for oxidation, suggesting that the natural substrate(s) may be structurally related to steroid compounds. The chain is Cytochrome P450 monooxygenase 110 from Postia placenta (strain ATCC 44394 / Madison 698-R) (Brown rot fungus).